The sequence spans 548 residues: Chaperonin GroEL (548 aa).

ATP-binding positions include Thr30 to Pro33, Lys51, Asp87 to Thr91, Gly415, Asn479 to Ala481, and Asp495.

It belongs to the chaperonin (HSP60) family. As to quaternary structure, forms a cylinder of 14 subunits composed of two heptameric rings stacked back-to-back. Interacts with the co-chaperonin GroES.

Its subcellular location is the cytoplasm. It carries out the reaction ATP + H2O + a folded polypeptide = ADP + phosphate + an unfolded polypeptide.. Its function is as follows. Together with its co-chaperonin GroES, plays an essential role in assisting protein folding. The GroEL-GroES system forms a nano-cage that allows encapsulation of the non-native substrate proteins and provides a physical environment optimized to promote and accelerate protein folding. The sequence is that of Chaperonin GroEL from Salmonella arizonae (strain ATCC BAA-731 / CDC346-86 / RSK2980).